The sequence spans 78 residues: Short neurotoxin OH-5 (78 aa).

A signal peptide spans 1–21 (MKNLLLTFLVVTIVCLDLGYT). 4 disulfides stabilise this stretch: cysteine 24/cysteine 40, cysteine 33/cysteine 58, cysteine 62/cysteine 70, and cysteine 71/cysteine 76.

The protein belongs to the three-finger toxin family. Short-chain subfamily. As to expression, expressed by the venom gland.

Its subcellular location is the secreted. This three-finger toxin binds and inhibits the nicotinic acetylcholine receptor (nAChR). In Ophiophagus hannah (King cobra), this protein is Short neurotoxin OH-5.